The chain runs to 294 residues: Diaminopimelate epimerase (294 aa).

2 residues coordinate substrate: Asn11 and Asn78. The active-site Proton donor is Cys87. Substrate is bound by residues 88–89, Asn167, Asn203, and 221–222; these read GN and ER. The active-site Proton acceptor is Cys230. 231–232 provides a ligand contact to substrate; the sequence is GT.

This sequence belongs to the diaminopimelate epimerase family. Homodimer.

It localises to the cytoplasm. It catalyses the reaction (2S,6S)-2,6-diaminopimelate = meso-2,6-diaminopimelate. The protein operates within amino-acid biosynthesis; L-lysine biosynthesis via DAP pathway; DL-2,6-diaminopimelate from LL-2,6-diaminopimelate: step 1/1. In terms of biological role, catalyzes the stereoinversion of LL-2,6-diaminopimelate (L,L-DAP) to meso-diaminopimelate (meso-DAP), a precursor of L-lysine and an essential component of the bacterial peptidoglycan. This Mycolicibacterium paratuberculosis (strain ATCC BAA-968 / K-10) (Mycobacterium paratuberculosis) protein is Diaminopimelate epimerase.